The following is a 498-amino-acid chain: Hexokinase-3 (498 aa).

The chain crosses the membrane as a helical span at residues 4-24 (VAVAFAAVAVVAACSVAAVMV). One can recognise a Hexokinase domain in the interval 35–494 (RTVVEILKEL…SSIGSALLVA (460 aa)). A hexokinase small subdomain region spans residues 90-227 (TGREKGTYYA…GLDMHVAALV (138 aa)). ADP-binding residues include G104 and T105. Residues T193, K194, N228, and D229 each contribute to the D-glucose site. Residues 228–483 (NDTVGALSLG…QYVVVKAMED (256 aa)) form a hexokinase large subdomain region. An ADP-binding site is contributed by T252. D-glucose is bound by residues N255, E283, and E314. G448 contributes to the ADP binding site.

It belongs to the hexokinase family. In terms of tissue distribution, expressed in roots, emerging lateral roots, vascular tissues of cotyledons, roots and leaves, root and shoot meristems, anther filaments and funiculi of mature seeds.

It is found in the mitochondrion outer membrane. The catalysed reaction is a D-hexose + ATP = a D-hexose 6-phosphate + ADP + H(+). It catalyses the reaction D-fructose + ATP = D-fructose 6-phosphate + ADP + H(+). The enzyme catalyses D-glucose + ATP = D-glucose 6-phosphate + ADP + H(+). The protein operates within carbohydrate metabolism; hexose metabolism. It functions in the pathway carbohydrate degradation; glycolysis; D-glyceraldehyde 3-phosphate and glycerone phosphate from D-glucose: step 1/4. In terms of biological role, fructose and glucose phosphorylating enzyme. May be involved in the phosphorylation of glucose during the export from mitochondrion to cytosol. Plays a role in plant growth and development, perhaps by mediating cross-talk between glucose and hormone response pathways. Involved in root hair cell development by mediating certain aspects of cross talk between glucose and ethylene response pathways. In Arabidopsis thaliana (Mouse-ear cress), this protein is Hexokinase-3.